Reading from the N-terminus, the 261-residue chain is Type III pantothenate kinase (261 aa).

Residue 7-14 (EQGNTNTM) coordinates ATP. 108 to 111 (GADR) provides a ligand contact to substrate. The Proton acceptor role is filled by aspartate 110. Aspartate 130 serves as a coordination point for K(+). An ATP-binding site is contributed by threonine 133. A substrate-binding site is contributed by threonine 187.

This sequence belongs to the type III pantothenate kinase family. As to quaternary structure, homodimer. Requires NH4(+) as cofactor. K(+) serves as cofactor.

Its subcellular location is the cytoplasm. It catalyses the reaction (R)-pantothenate + ATP = (R)-4'-phosphopantothenate + ADP + H(+). The protein operates within cofactor biosynthesis; coenzyme A biosynthesis; CoA from (R)-pantothenate: step 1/5. In terms of biological role, catalyzes the phosphorylation of pantothenate (Pan), the first step in CoA biosynthesis. The protein is Type III pantothenate kinase of Caulobacter vibrioides (strain ATCC 19089 / CIP 103742 / CB 15) (Caulobacter crescentus).